We begin with the raw amino-acid sequence, 504 residues long: Pyruvate kinase (504 aa).

Arg-53 is a binding site for substrate. Positions 55, 57, 88, and 89 each coordinate K(+). 55–58 lines the ATP pocket; that stretch reads NFSH. ATP is bound by residues Arg-95 and Lys-181. Residue Glu-246 coordinates Mg(2+). The substrate site is built by Gly-269, Asp-270, and Thr-302. Asp-270 provides a ligand contact to Mg(2+).

Belongs to the pyruvate kinase family. In terms of assembly, homotetramer. Mg(2+) serves as cofactor. Requires K(+) as cofactor.

It is found in the cytoplasm. It carries out the reaction pyruvate + ATP = phosphoenolpyruvate + ADP + H(+). It functions in the pathway carbohydrate degradation; glycolysis; pyruvate from D-glyceraldehyde 3-phosphate: step 5/5. This is Pyruvate kinase (CDC19) from Candida albicans (strain SC5314 / ATCC MYA-2876) (Yeast).